The primary structure comprises 628 residues: ATP-binding cassette sub-family F member 2 (628 aa).

The interval methionine 1 to glutamate 57 is disordered. Basic and acidic residues predominate over residues alanine 40–threonine 53. ABC transporter domains are found at residues valine 91–methionine 330 and isoleucine 401–glutamate 618. Glycine 123–serine 130 contacts ATP. Threonine 223 is modified (phosphothreonine). N6-acetyllysine is present on lysine 309. Residue glycine 435–serine 442 coordinates ATP. Serine 517 is modified (phosphoserine).

It belongs to the ABC transporter superfamily. ABCF family. EF3 subfamily.

The sequence is that of ATP-binding cassette sub-family F member 2 from Mus musculus (Mouse).